Consider the following 137-residue polypeptide: MVEDSFLTDTQIKVLKLRKKGLTQEEIAKMLGTSRANISMIEKRAKENIKKAYNTIKIYNRIMAPLSIEIEEGTDVLEIPDIVFKKADEEGIKVKYNTLELIELIKENASEFIEKRTVKKKFKIYILENGDLDVGGS.

This sequence belongs to the Tfx family.

Functionally, putative transcriptional regulator. The protein is Putative transcriptional regulatory protein MJ0173 of Methanocaldococcus jannaschii (strain ATCC 43067 / DSM 2661 / JAL-1 / JCM 10045 / NBRC 100440) (Methanococcus jannaschii).